The sequence spans 385 residues: ADP,ATP carrier protein 2, mitochondrial (385 aa).

The transit peptide at 1 to 74 (MVEQTQHPTI…ATTTSPVFVQ (74 aa)) directs the protein to the mitochondrion. Solcar repeat units lie at residues 82–175 (TNFA…FKRL), 187–280 (KWFA…VKPV), and 288–374 (DSFF…LQLI). The next 5 helical transmembrane spans lie at 84–111 (FAIDFMMGGVSAAVSKTAAAPIERVKLL), 152–176 (TANVIRYFPTQALNFAFKDYFKRLF), 185–205 (YWKWFAGNLASGGAAGASSLL), 256–277 (FNISCAGIIVYRGLYFGLYDSV), and 291–311 (FASFALGWLITNGAGLASYPI). ADP-binding residues include R157 and K169. R315 contacts ADP. Positions 315–320 (RRRMMM) are important for transport activity. The short motif at 315–320 (RRRMMM) is the Nucleotide carrier signature motif element. A helical transmembrane segment spans residues 351-371 (AGANILRAVAGAGVLAGYDKL).

The protein belongs to the mitochondrial carrier (TC 2.A.29) family. Monomer.

Its subcellular location is the mitochondrion inner membrane. It catalyses the reaction ADP(in) + ATP(out) = ADP(out) + ATP(in). Its activity is regulated as follows. The matrix-open state (m-state) is inhibited by the membrane-permeable bongkrekic acid (BKA). The cytoplasmic-open state (c-state) is inhibited by the membrane-impermeable toxic inhibitor carboxyatractyloside (CATR). Its function is as follows. ADP:ATP antiporter that mediates import of ADP into the mitochondrial matrix for ATP synthesis, and export of ATP out to fuel the cell. Cycles between the cytoplasmic-open state (c-state) and the matrix-open state (m-state): operates by the alternating access mechanism with a single substrate-binding site intermittently exposed to either the cytosolic (c-state) or matrix (m-state) side of the inner mitochondrial membrane. The polypeptide is ADP,ATP carrier protein 2, mitochondrial (AAC2) (Arabidopsis thaliana (Mouse-ear cress)).